The primary structure comprises 367 residues: Heme A synthase 2 (367 aa).

A run of 5 helical transmembrane segments spans residues 28–48 (MVAI…GIGA), 114–134 (MWGR…LWTG), 143–163 (WLVT…WMVA), 180–200 (VHYC…LTVL), and 221–241 (MAMG…FLSG). Position 284 (H284) interacts with heme. The next 3 helical transmembrane spans lie at 286–306 (LLGT…IRAD), 314–334 (AFLV…TTLV), and 340–360 (IGIV…WAWF). Residue H344 participates in heme binding.

Belongs to the COX15/CtaA family. Type 2 subfamily. In terms of assembly, interacts with CtaB. The cofactor is heme b.

The protein localises to the cell membrane. It catalyses the reaction Fe(II)-heme o + 2 A + H2O = Fe(II)-heme a + 2 AH2. It functions in the pathway porphyrin-containing compound metabolism; heme A biosynthesis; heme A from heme O: step 1/1. In terms of biological role, catalyzes the conversion of heme O to heme A by two successive hydroxylations of the methyl group at C8. The first hydroxylation forms heme I, the second hydroxylation results in an unstable dihydroxymethyl group, which spontaneously dehydrates, resulting in the formyl group of heme A. This is Heme A synthase 2 from Acidiphilium cryptum (strain JF-5).